Reading from the N-terminus, the 622-residue chain is MRKLYCVLLLSAFEFTYMINFGRGQNYWEHPYQKSDVYHPINEHREHPKEYQYPLHQEHTYQQEDSGEDENTLQHAYPIDHEGAEPAPQEQNLFSSIEIVERSNYMGNPWTEYMAKYDIEEVHGSGIRVDLGEDAEVAGTQYRLPSGKCPVFGKGIIIENSNTTFLTPVATGNQYLKDGGFAFPPTEPLMSPMTLDEMRHFYKDNKYVKNLDELTLCSRHAGNMIPDNDKNSNYKYPAVYDDKDKKCHILYIAAQENNGPRYCNKDESKRNSMFCFRPAKDISFQNYTYLSKNVVDNWEKVCPRKNLQNAKFGLWVDGNCEDIPHVNEFSAIDLFECNKLVFELSASDQPKQYEQHLTDYEKIKEGFKNKNASMIKSAFLPTGAFKADRYKSHGKGYNWGNYNTETQKCEIFNVKPTCLINNSSYIATTALSHPIEVEHNFPCSLYKNEIMKEIERESKRIKLNDNDDEGNKKIIAPRIFISDDKDSLKCPCDPEIVSNSTCNFFVCKCVERRAEVTSNNEVVVKEEYKDEYADIPEHKPTYDKMKIIIASSAAVAVLATILMVYLYKRKGNAEKYDKMDEPQHYGKSNSRNDEMLDPEASFWGEEKRASHTTPVLMEKPYY.

A signal peptide spans 1 to 24 (MRKLYCVLLLSAFEFTYMINFGRG). At 25–546 (QNYWEHPYQK…EHKPTYDKMK (522 aa)) the chain is on the extracellular side. Cystine bridges form between Cys-149–Cys-302, Cys-217–Cys-247, Cys-263–Cys-275, Cys-320–Cys-418, and Cys-337–Cys-409. N-linked (GlcNAc...) asparagine glycosylation occurs at Asn-162. Residues Asn-286, Asn-371, Asn-421, Asn-422, and Asn-499 are each glycosylated (N-linked (GlcNAc...) asparagine). 3 disulfide bridges follow: Cys-443–Cys-502, Cys-490–Cys-507, and Cys-492–Cys-509. A helical membrane pass occupies residues 547–567 (IIIASSAAVAVLATILMVYLY). Over 568-622 (KRKGNAEKYDKMDEPQHYGKSNSRNDEMLDPEASFWGEEKRASHTTPVLMEKPYY) the chain is Cytoplasmic. The segment covering 578–594 (KMDEPQHYGKSNSRNDE) has biased composition (basic and acidic residues). The segment at 578 to 607 (KMDEPQHYGKSNSRNDEMLDPEASFWGEEK) is disordered.

This sequence belongs to the apicomplexan parasites AMA1 family.

It is found in the membrane. In terms of biological role, involved in parasite invasion of erythrocytes. The protein is Apical membrane antigen 1 (AMA-1) of Plasmodium falciparum (isolate FC27 / Papua New Guinea).